A 660-amino-acid chain; its full sequence is Methionine--tRNA ligase (660 aa).

The 'HIGH' region motif lies at Tyr15–His25. Positions Lys311–Ser315 match the 'KMSKS' region motif. Position 314 (Lys314) interacts with ATP. A disordered region spans residues Leu535 to Asp554. Over residues Lys540–Lys550 the composition is skewed to basic and acidic residues. The 101-residue stretch at Asp560–Lys660 folds into the tRNA-binding domain.

The protein belongs to the class-I aminoacyl-tRNA synthetase family. MetG type 2B subfamily. Homodimer.

The protein localises to the cytoplasm. The catalysed reaction is tRNA(Met) + L-methionine + ATP = L-methionyl-tRNA(Met) + AMP + diphosphate. In terms of biological role, is required not only for elongation of protein synthesis but also for the initiation of all mRNA translation through initiator tRNA(fMet) aminoacylation. The sequence is that of Methionine--tRNA ligase (metG) from Halalkalibacterium halodurans (strain ATCC BAA-125 / DSM 18197 / FERM 7344 / JCM 9153 / C-125) (Bacillus halodurans).